Reading from the N-terminus, the 394-residue chain is NAC domain-containing protein 3 (394 aa).

An NAC domain is found at 3–147 (TPVGLRFCPT…TYTLCKVMFN (145 aa)). The DNA-binding element occupies 104–153 (IGEKKILMFYTSKESKSDWVIHEYHGFSHNQMMMTYTLCKVMFNGGMREK). Disordered regions lie at residues 152–173 (EKSSSSPSSSGVSGIEQSRRDS) and 264–300 (NSLTGVFSDDVSSDDNDSDLLTPKTNSIQTSSTCDSF). Residues 155–165 (SSSPSSSGVSG) show a composition bias toward low complexity. Positions 286–300 (PKTNSIQTSSTCDSF) are enriched in polar residues.

The protein resides in the nucleus. This is NAC domain-containing protein 3 (NAC003) from Arabidopsis thaliana (Mouse-ear cress).